A 306-amino-acid chain; its full sequence is Heterogeneous nuclear ribonucleoproteins C1/C2 (306 aa).

Ala2 carries the N-acetylalanine modification. Residues Lys8, Lys50, Lys89, and Lys94 each participate in a glycyl lysine isopeptide (Lys-Gly) (interchain with G-Cter in SUMO2) cross-link. The region spanning 16–87 (SRVFIGNLNT…QVLDINLAAE (72 aa)) is the RRM domain. Ser107 and Val108 each carry phosphoserine. At Thr109 the chain carries Phosphothreonine. Phosphoserine is present on residues Ser113, Ser115, and Ser121. 2 disordered regions span residues 139–190 (YPAR…KLKG) and 221–306 (QSKQ…EDDS). The Nuclear localization signal signature appears at 155–161 (PSKRQRV). Residues Ser162 and Ser166 each carry the phosphoserine modification. Residues 175 to 185 (SKSGQRGSSKS) are compositionally biased toward low complexity. Lys176 carries the post-translational modification N6-acetyllysine; alternate. Lys176 participates in a covalent cross-link: Glycyl lysine isopeptide (Lys-Gly) (interchain with G-Cter in SUMO2); alternate. The stretch at 190–238 (GDDLQAIKKELTQIKQKVDSLLENLEKIEKEQSKQAVEMKNDKSEEEQS) forms a coiled coil. Over residues 221–232 (QSKQAVEMKNDK) the composition is skewed to basic and acidic residues. Glycyl lysine isopeptide (Lys-Gly) (interchain with G-Cter in SUMO2) cross-links involve residues Lys223 and Lys229. Lys232 is covalently cross-linked (Glycyl lysine isopeptide (Lys-Gly) (interchain with G-Cter in SUMO2); alternate). Residue Lys232 forms a Glycyl lysine isopeptide (Lys-Gly) (interchain with G-Cter in SUMO1); alternate linkage. A phosphoserine mark is found at Ser233, Ser238, Ser239, and Ser241. Over residues 242-253 (VKKDETNVKMES) the composition is skewed to basic and acidic residues. Glycyl lysine isopeptide (Lys-Gly) (interchain with G-Cter in SUMO2) cross-links involve residues Lys243 and Lys244. A Glycyl lysine isopeptide (Lys-Gly) (interchain with G-Cter in SUMO2); alternate cross-link involves residue Lys250. Lys250 participates in a covalent cross-link: Glycyl lysine isopeptide (Lys-Gly) (interchain with G-Cter in SUMO); alternate. Phosphoserine occurs at positions 253 and 260. Residues 255 to 276 (GGADDSAEEGDLLDDDDNEDRG) are compositionally biased toward acidic residues. The segment covering 277–287 (DDQLELIKDDE) has biased composition (basic and acidic residues). Positions 288–306 (KEAEEGEDDRDSANGEDDS) are enriched in acidic residues. A phosphoserine mark is found at Ser299 and Ser306.

This sequence belongs to the RRM HNRPC family. RALY subfamily. In terms of assembly, tetramer composed of 3 copies of isoform C1 and 1 copy of isoform C2. Assembly of 3 tetramers with bound pre-mRNA gives rise to a 19S complex that interacts with HNRNPA2B1 tetramers. Component of the 40S hnRNP particle. Identified in the spliceosome C complex. Interacts with IGF2BP1. Interacts with DHX9; this interaction is direct, enhanced probably by their concomitant binding to RNA and mediates the attachment to actin filaments. Interacts with PPIA/CYPA. Interacts with YWHAE. In terms of processing, phosphorylated on Ser-260 and Ser-299 in resting cells. Phosphorylated on Ser-253 and on 1 serine residue in the poly-Ser stretch at position 238 in response to hydrogen peroxide. Post-translationally, sumoylated. Sumoylation reduces affinity for mRNA. Ubiquitinated and degraded after nucleo-cytoplasmic transport by YWHAE.

It localises to the nucleus. Binds pre-mRNA and nucleates the assembly of 40S hnRNP particles. Interacts with poly-U tracts in the 3'-UTR or 5'-UTR of mRNA and modulates the stability and the level of translation of bound mRNA molecules. Single HNRNPC tetramers bind 230-240 nucleotides. Trimers of HNRNPC tetramers bind 700 nucleotides. May play a role in the early steps of spliceosome assembly and pre-mRNA splicing. N6-methyladenosine (m6A) has been shown to alter the local structure in mRNAs and long non-coding RNAs (lncRNAs) via a mechanism named 'm(6)A-switch', facilitating binding of HNRNPC, leading to regulation of mRNA splicing. The protein is Heterogeneous nuclear ribonucleoproteins C1/C2 (HNRNPC) of Homo sapiens (Human).